The chain runs to 164 residues: Transcription elongation factor GreA (164 aa).

Residues 50 to 75 adopt a coiled-coil conformation; that stretch reads YHAAREEQGQQEARIRQLQDLLNIAK.

It belongs to the GreA/GreB family.

In terms of biological role, necessary for efficient RNA polymerase transcription elongation past template-encoded arresting sites. The arresting sites in DNA have the property of trapping a certain fraction of elongating RNA polymerases that pass through, resulting in locked ternary complexes. Cleavage of the nascent transcript by cleavage factors such as GreA or GreB allows the resumption of elongation from the new 3'terminus. GreA releases sequences of 2 to 3 nucleotides. The chain is Transcription elongation factor GreA from Mycobacterium leprae (strain Br4923).